The sequence spans 171 residues: Nucleoside-triphosphatase THEP1 (171 aa).

Residues 8-15 (GPPGAGKS) and 95-102 (VYLIDEIG) each bind ATP.

The protein belongs to the THEP1 NTPase family.

It catalyses the reaction a ribonucleoside 5'-triphosphate + H2O = a ribonucleoside 5'-diphosphate + phosphate + H(+). Its function is as follows. Has nucleotide phosphatase activity towards ATP, GTP, CTP, TTP and UTP. May hydrolyze nucleoside diphosphates with lower efficiency. This chain is Nucleoside-triphosphatase THEP1, found in Ignicoccus hospitalis (strain KIN4/I / DSM 18386 / JCM 14125).